Here is a 684-residue protein sequence, read N- to C-terminus: Fidgetin-like protein 2 (684 aa).

Residues 27 to 41 show a composition bias toward polar residues; sequence PEQHLDVSSTTSSPA. Disordered stretches follow at residues 27–48, 99–179, and 292–403; these read PEQH…ELYS, PGAF…PHSS, and LDEE…SDPM. Residues 160 to 179 show a composition bias toward low complexity; the sequence is SNLSDSGYSGSSSCSGPHSS. Ala-431 provides a ligand contact to ATP.

This sequence belongs to the AAA ATPase family. The cofactor is Mg(2+). Highly expressed in vascular endothelial cells and neuronal cells.

The protein localises to the cytoplasm. It localises to the cell cortex. It catalyses the reaction ATP + H2O = ADP + phosphate + H(+). In terms of biological role, microtubule-severing enzyme that negatively regulates cell migration and wound healing. In migrating cells, targets dynamic microtubules (MTs) at the leading edge and severs them, thereby suppressing motility. Negative regulator of axon regeneration that suppresses axonal growth by selectively severing dynamic MTs in the distal axon shaft and growth cone. Contributes to proper cell branching during endothelial and neuronal development. This is Fidgetin-like protein 2 (fignl2) from Danio rerio (Zebrafish).